Reading from the N-terminus, the 345-residue chain is Histone H3-like centromeric protein cpar-1 (345 aa).

Residues 117-246 are disordered; that stretch reads NHSNRKPLEE…SRVTKTHNRK (130 aa). The span at 122–149 shows a compositional bias: basic and acidic residues; the sequence is KPLEESRRREEPRDRVHESNIDITHRGD. The segment covering 233 to 246 has biased composition (basic residues); the sequence is RSGKSRVTKTHNRK. An H3-like region spans residues 263 to 340; it reads STDMLIQKAP…TDIQLYRRLC (78 aa).

The protein belongs to the histone H3 family. Forms a nucleosome-like histone octamer containing two molecules each of H2A, H2B, cpar-1 and H4 assembled in one cpar-1-H4 heterotetramer and two H2A-H2B heterodimers. Cleaved at the onset of meiotic anaphase I, likely by separase sep-1.

Its subcellular location is the nucleus. It is found in the chromosome. Histone H3-like variant which exclusively replaces conventional H3 in the nucleosome core of centromeric chromatin at the inner plate of the kinetochore. Required for recruitment and assembly of kinetochore proteins, mitotic progression and chromosome segregation. May serve as an epigenetic mark that propagates centromere identity through replication and cell division. Not required for chromosome segregation during meiosis. The sequence is that of Histone H3-like centromeric protein cpar-1 from Caenorhabditis briggsae.